Here is a 408-residue protein sequence, read N- to C-terminus: Aminomethyltransferase, mitochondrial (408 aa).

Residues 1–30 (MRGGLWQLGQSITRRLANGGDKKAVARRCF) constitute a mitochondrion transit peptide. Substrate-binding residues include Glu235, Arg266, and Tyr404.

Belongs to the GcvT family. In terms of assembly, the glycine cleavage system is composed of four proteins: P, T, L and H.

It is found in the mitochondrion. It catalyses the reaction N(6)-[(R)-S(8)-aminomethyldihydrolipoyl]-L-lysyl-[protein] + (6S)-5,6,7,8-tetrahydrofolate = N(6)-[(R)-dihydrolipoyl]-L-lysyl-[protein] + (6R)-5,10-methylene-5,6,7,8-tetrahydrofolate + NH4(+). Functionally, the glycine cleavage system catalyzes the degradation of glycine. In Pisum sativum (Garden pea), this protein is Aminomethyltransferase, mitochondrial (GDCST).